Reading from the N-terminus, the 346-residue chain is Protein RecA (346 aa).

Residue 65-72 participates in ATP binding; it reads GPESSGKT.

The protein belongs to the RecA family.

Its subcellular location is the cytoplasm. Functionally, can catalyze the hydrolysis of ATP in the presence of single-stranded DNA, the ATP-dependent uptake of single-stranded DNA by duplex DNA, and the ATP-dependent hybridization of homologous single-stranded DNAs. It interacts with LexA causing its activation and leading to its autocatalytic cleavage. This Pseudomonas aeruginosa (strain UCBPP-PA14) protein is Protein RecA.